A 78-amino-acid polypeptide reads, in one-letter code: UPF0335 protein RrIowa_0193 (78 aa).

Belongs to the UPF0335 family.

The chain is UPF0335 protein RrIowa_0193 from Rickettsia rickettsii (strain Iowa).